A 215-amino-acid chain; its full sequence is Cytochrome b6 (215 aa).

The chain crosses the membrane as a helical span at residues 32-52; sequence IFYCLGGITLTCFLVQVATGF. Cys-35 is a binding site for heme c. The heme b site is built by His-86 and His-100. 3 helical membrane passes run 90 to 110, 116 to 136, and 186 to 206; these read ASMM…TGGF, LTWV…VTGY, and LHTF…FSMI. Heme b is bound by residues His-187 and His-202.

It belongs to the cytochrome b family. PetB subfamily. In terms of assembly, the 4 large subunits of the cytochrome b6-f complex are cytochrome b6, subunit IV (17 kDa polypeptide, PetD), cytochrome f and the Rieske protein, while the 4 small subunits are PetG, PetL, PetM and PetN. The complex functions as a dimer. Heme b is required as a cofactor. Requires heme c as cofactor.

Its subcellular location is the plastid. It is found in the chloroplast thylakoid membrane. Functionally, component of the cytochrome b6-f complex, which mediates electron transfer between photosystem II (PSII) and photosystem I (PSI), cyclic electron flow around PSI, and state transitions. The polypeptide is Cytochrome b6 (Piper cenocladum (Ant piper)).